The sequence spans 140 residues: Lymphocyte antigen 6H (140 aa).

The first 25 residues, 1 to 25 (MLPAAMKGLGLALLAVLLCSAPAHG), serve as a signal peptide directing secretion. The 66-residue stretch at 26–91 (LWCQDCTLTT…RHFFSDYLMG (66 aa)) folds into the UPAR/Ly6 domain. 5 disulfide bridges follow: cysteine 28/cysteine 52, cysteine 31/cysteine 40, cysteine 45/cysteine 73, cysteine 77/cysteine 104, and cysteine 105/cysteine 110. Residue asparagine 36 is glycosylated (N-linked (GlcNAc...) asparagine). Residue glycine 115 is the site of GPI-anchor amidated glycine attachment. A propeptide spans 116-140 (AGHSPWALAGGLLLSLGPALLWAGP) (removed in mature form).

As to quaternary structure, interacts with CHRNA4 and CHRNA7. In terms of tissue distribution, highly expressed in brain (cerebral cortex, amygdala, hippocampus and subthalamic nucleus) and in acute human leukemic cell line MOLT-3. Also found in lower levels in testis, pancreas, small intestine and colon.

Its subcellular location is the cell membrane. Believed to act as a modulator of nicotinic acetylcholine receptors (nAChRs) activity. In vitro inhibits alpha-3:beta-4-containing nAChRs maximum response. May play a role in the intracellular trafficking of alpha-7-containing nAChRs and may inhibit their expression at the cell surface. Seems to inhibit alpha-7/CHRNA7 signaling in hippocampal neurons. This Homo sapiens (Human) protein is Lymphocyte antigen 6H (LY6H).